The sequence spans 164 residues: Ecotin (164 aa).

The first 20 residues, 1 to 20 (MKMFVPAVVFAALASASAWA), serve as a signal peptide directing secretion. A disulfide bond links Cys-72 and Cys-109.

It belongs to the protease inhibitor I11 (ecotin) family. As to quaternary structure, homodimer.

The protein resides in the periplasm. General inhibitor of pancreatic serine proteases: inhibits chymotrypsin, trypsin, elastases, factor X, kallikrein as well as a variety of other proteases. This Salmonella enteritidis PT4 (strain P125109) protein is Ecotin.